A 216-amino-acid chain; its full sequence is Flagellin B3 (216 aa).

A propeptide spanning residues 1-11 (MLLDYIKSRRG) is cleaved from the precursor.

Belongs to the archaeal flagellin family.

It is found in the archaeal flagellum. Flagellin is the subunit protein which polymerizes to form the filaments of archaeal flagella. The chain is Flagellin B3 (flaB3) from Methanocaldococcus jannaschii (strain ATCC 43067 / DSM 2661 / JAL-1 / JCM 10045 / NBRC 100440) (Methanococcus jannaschii).